Here is a 471-residue protein sequence, read N- to C-terminus: Cysteine--tRNA ligase (471 aa).

Position 29 (C29) interacts with Zn(2+). Positions P31 to N41 match the 'HIGH' region motif. The Zn(2+) site is built by C209, H234, and E238. The 'KMSKS' region signature appears at K266–S270. Residue K269 coordinates ATP.

The protein belongs to the class-I aminoacyl-tRNA synthetase family. In terms of assembly, monomer. Requires Zn(2+) as cofactor.

It localises to the cytoplasm. It catalyses the reaction tRNA(Cys) + L-cysteine + ATP = L-cysteinyl-tRNA(Cys) + AMP + diphosphate. The sequence is that of Cysteine--tRNA ligase from Listeria innocua serovar 6a (strain ATCC BAA-680 / CLIP 11262).